A 404-amino-acid chain; its full sequence is Chorismate synthase (404 aa).

Residues Arg-40 and Arg-46 each contribute to the NADP(+) site. FMN is bound by residues 136–138 (RAS), 257–258 (QA), Gly-301, 316–320 (KPIST), and Arg-342.

It belongs to the chorismate synthase family. As to quaternary structure, homotetramer. FMNH2 is required as a cofactor.

The catalysed reaction is 5-O-(1-carboxyvinyl)-3-phosphoshikimate = chorismate + phosphate. Its pathway is metabolic intermediate biosynthesis; chorismate biosynthesis; chorismate from D-erythrose 4-phosphate and phosphoenolpyruvate: step 7/7. Catalyzes the anti-1,4-elimination of the C-3 phosphate and the C-6 proR hydrogen from 5-enolpyruvylshikimate-3-phosphate (EPSP) to yield chorismate, which is the branch point compound that serves as the starting substrate for the three terminal pathways of aromatic amino acid biosynthesis. This reaction introduces a second double bond into the aromatic ring system. This is Chorismate synthase from Mycolicibacterium vanbaalenii (strain DSM 7251 / JCM 13017 / BCRC 16820 / KCTC 9966 / NRRL B-24157 / PYR-1) (Mycobacterium vanbaalenii).